Here is a 910-residue protein sequence, read N- to C-terminus: Putative coatomer subunit beta'-3 (910 aa).

WD repeat units lie at residues 13 to 52, 55 to 94, 97 to 136, 140 to 180, 183 to 224, 227 to 266, 269 to 309, 351 to 393, and 461 to 501; these read QRSE…MVKS, VTEL…KVKV, AHTD…MCTQ, GHSH…PNFT, GHSK…CVQT, GHAH…LENT, YGLE…ASMD, TCDL…GSAL, and RIDV…SHLD. Positions 865–884 are enriched in acidic residues; it reads ENGVEESQEDAVEVDVEADG. The tract at residues 865–910 is disordered; the sequence is ENGVEESQEDAVEVDVEADGSTDGTVLVNGNDTEEQWGTNNEESLA. The span at 886-910 shows a compositional bias: polar residues; that stretch reads TDGTVLVNGNDTEEQWGTNNEESLA.

This sequence belongs to the WD repeat COPB2 family. As to quaternary structure, oligomeric complex that consists of at least the alpha, beta, beta', gamma, delta, epsilon and zeta subunits.

The protein resides in the cytoplasm. Its subcellular location is the golgi apparatus membrane. The protein localises to the cytoplasmic vesicle. It localises to the COPI-coated vesicle membrane. Functionally, the coatomer is a cytosolic protein complex that binds to dilysine motifs and reversibly associates with Golgi non-clathrin-coated vesicles, which further mediate biosynthetic protein transport from the ER, via the Golgi up to the trans Golgi network. Coatomer complex is required for budding from Golgi membranes, and is essential for the retrograde Golgi-to-ER transport of dilysine-tagged proteins. This Oryza sativa subsp. japonica (Rice) protein is Putative coatomer subunit beta'-3.